The following is a 409-amino-acid chain: Elongation factor Tu, chloroplastic (409 aa).

The 205-residue stretch at 10–214 (KPHVNIGTIG…NVDSYIPTPA (205 aa)) folds into the tr-type G domain. Positions 19–26 (GHVDHGKT) are G1. 19 to 26 (GHVDHGKT) serves as a coordination point for GTP. Mg(2+) is bound at residue Thr-26. The interval 60–64 (GITIN) is G2. The interval 81 to 84 (DCPG) is G3. GTP contacts are provided by residues 81-85 (DCPGH) and 136-139 (NKED). Residues 136 to 139 (NKED) are G4. Residues 174 to 176 (SAL) form a G5 region.

Belongs to the TRAFAC class translation factor GTPase superfamily. Classic translation factor GTPase family. EF-Tu/EF-1A subfamily.

It is found in the plastid. The protein resides in the chloroplast. The enzyme catalyses GTP + H2O = GDP + phosphate + H(+). Functionally, GTP hydrolase that promotes the GTP-dependent binding of aminoacyl-tRNA to the A-site of ribosomes during protein biosynthesis. This chain is Elongation factor Tu, chloroplastic (tufA), found in Ostreococcus tauri.